Consider the following 208-residue polypeptide: Cytochrome c biogenesis ATP-binding export protein CcmA (208 aa).

Positions leucine 2–glutamate 206 constitute an ABC transporter domain. Position 34–41 (glycine 34–threonine 41) interacts with ATP.

Belongs to the ABC transporter superfamily. CcmA exporter (TC 3.A.1.107) family. As to quaternary structure, the complex is composed of two ATP-binding proteins (CcmA) and two transmembrane proteins (CcmB).

Its subcellular location is the cell inner membrane. The catalysed reaction is heme b(in) + ATP + H2O = heme b(out) + ADP + phosphate + H(+). Its function is as follows. Part of the ABC transporter complex CcmAB involved in the biogenesis of c-type cytochromes; once thought to export heme, this seems not to be the case, but its exact role is uncertain. Responsible for energy coupling to the transport system. This is Cytochrome c biogenesis ATP-binding export protein CcmA from Tatumella citrea (Pantoea citrea).